The sequence spans 47 residues: Thionin (47 aa).

4 disulfide bridges follow: cysteine 3–cysteine 41, cysteine 4–cysteine 33, cysteine 12–cysteine 31, and cysteine 16–cysteine 27.

It belongs to the plant thionin (TC 1.C.44) family. 4 C-C subfamily.

The protein localises to the secreted. In terms of biological role, thionins are small plant proteins which are toxic to animal cells. They seem to exert their toxic effect at the level of the cell membrane. Their precise function is not known. The chain is Thionin (THI1) from Pyrularia pubera (Buffalo nut).